The sequence spans 475 residues: MSSESISENYVVKDMGLAEWGRREIRMAEAEMPGLMAIREEYRGTKPLAGARITGSLHMTIQTAVLIETLAELGADLRWASCNIYSTQDHAAAAIAATGVPVFAYKGETLEEYWEYTFKALAYEEGPQLIVDDGGDATLLIHRGVERERAYARTGKVPEISHDNKELSIVDALLNRQLLVDAEYWQRMATGLLGVSEETTTGVHRLYHMARNGELLFPAFNVNDSVTKSKFDNLYGCRESLIDGIKRATDVMIAGKKCVVLGYGDVGKGCAQAFKGMGALVSVTEVDPICALQAAMEGFAVVDMDEACQWGDIFVTTTGNVDVITRSHMDVMKNEAIVCNIGHFDSEIQVDALYDDPSLTVHEVKPQVDQIEWPDGKRITVLAKGRLVNLGCATGHPSFVMSNSFTNQVLAQIELWQNSDRYENKVYVLPKQLDEKVARLHLANLGVKLTRMTEKQADYLGVPVDGPYKPEHYRY.

Positions 60, 133, and 198 each coordinate substrate. 199–201 (TTT) lines the NAD(+) pocket. Substrate-binding residues include Lys228 and Asp232. NAD(+)-binding positions include Asn233, 262–267 (GYGDVG), Glu285, Asn320, 341–343 (IGH), and Asn389.

It belongs to the adenosylhomocysteinase family. NAD(+) serves as cofactor.

The protein resides in the cytoplasm. The catalysed reaction is S-adenosyl-L-homocysteine + H2O = L-homocysteine + adenosine. It participates in amino-acid biosynthesis; L-homocysteine biosynthesis; L-homocysteine from S-adenosyl-L-homocysteine: step 1/1. Its function is as follows. May play a key role in the regulation of the intracellular concentration of adenosylhomocysteine. This chain is Adenosylhomocysteinase, found in Syntrophotalea carbinolica (strain DSM 2380 / NBRC 103641 / GraBd1) (Pelobacter carbinolicus).